The primary structure comprises 479 residues: Ribosomal RNA small subunit methyltransferase F (479 aa).

Residues 125–131 (AAAPGSK), E149, D176, and D194 contribute to the S-adenosyl-L-methionine site. C247 (nucleophile) is an active-site residue.

Belongs to the class I-like SAM-binding methyltransferase superfamily. RsmB/NOP family.

The protein localises to the cytoplasm. The enzyme catalyses cytidine(1407) in 16S rRNA + S-adenosyl-L-methionine = 5-methylcytidine(1407) in 16S rRNA + S-adenosyl-L-homocysteine + H(+). Its function is as follows. Specifically methylates the cytosine at position 1407 (m5C1407) of 16S rRNA. The protein is Ribosomal RNA small subunit methyltransferase F of Salmonella paratyphi B (strain ATCC BAA-1250 / SPB7).